The primary structure comprises 498 residues: XK-related protein 4 (498 aa).

Residues 24–46 (SEHSGSVQGLHPGAQPDSAGAGD) form a disordered region. 2 helical membrane passes run 81–101 (CLWIVAAVAVYVADVGSDVWL) and 111–131 (YWWFGLTLFFVVLGSFSVQLF). A disordered region spans residues 166–203 (SHGDVTAQHHPATPQRQASTASRNTTTNSTASTGLGPR). The segment covering 183-198 (ASTASRNTTTNSTAST) has biased composition (low complexity). 2 helical membrane-spanning segments follow: residues 302–322 (LFIYYLLILAENAALSALWYL) and 332–352 (FAVPALCVIFSSFLTGVVFML).

It belongs to the XK family.

It localises to the cell membrane. The enzyme catalyses a 1,2-diacyl-sn-glycero-3-phospho-L-serine(in) = a 1,2-diacyl-sn-glycero-3-phospho-L-serine(out). Phospholipid scramblase that promotes phosphatidylserine exposure on apoptotic cell surface. Phosphatidylserine is a specific marker only present at the surface of apoptotic cells and acts as a specific signal for engulfment. This is XK-related protein 4 from Tetraodon nigroviridis (Spotted green pufferfish).